The primary structure comprises 246 residues: MIIPALDLIDGAVVRLHQGDYQTQCHYGADPLPRLQDYLRQGAEVLHLVDLTGARDPQTRQIPLLRRLLAGVAPALVQVGGGIRSAADVEVLLEAGATRVVVGSTAVLQPQEVQRWFERFGPDALVLALDVRIDDDGQRRVAISGWQEDSGATLEQVITQYRPLGLKHVLCTDISRDGTLTGSNVSLYRSLCDAWSDIAFQSSGGIGSLADIAQLRHSGVQGVIVGRSLLENKFTVAEALACWQNA.

D7 functions as the Proton acceptor in the catalytic mechanism. D130 (proton donor) is an active-site residue.

The protein belongs to the HisA/HisF family.

The protein localises to the cytoplasm. It carries out the reaction 1-(5-phospho-beta-D-ribosyl)-5-[(5-phospho-beta-D-ribosylamino)methylideneamino]imidazole-4-carboxamide = 5-[(5-phospho-1-deoxy-D-ribulos-1-ylimino)methylamino]-1-(5-phospho-beta-D-ribosyl)imidazole-4-carboxamide. Its pathway is amino-acid biosynthesis; L-histidine biosynthesis; L-histidine from 5-phospho-alpha-D-ribose 1-diphosphate: step 4/9. The sequence is that of 1-(5-phosphoribosyl)-5-[(5-phosphoribosylamino)methylideneamino] imidazole-4-carboxamide isomerase from Sodalis glossinidius (strain morsitans).